The following is a 220-amino-acid chain: Protein GrpE (220 aa).

Belongs to the GrpE family. In terms of assembly, homodimer.

The protein resides in the cytoplasm. Its function is as follows. Participates actively in the response to hyperosmotic and heat shock by preventing the aggregation of stress-denatured proteins, in association with DnaK and GrpE. It is the nucleotide exchange factor for DnaK and may function as a thermosensor. Unfolded proteins bind initially to DnaJ; upon interaction with the DnaJ-bound protein, DnaK hydrolyzes its bound ATP, resulting in the formation of a stable complex. GrpE releases ADP from DnaK; ATP binding to DnaK triggers the release of the substrate protein, thus completing the reaction cycle. Several rounds of ATP-dependent interactions between DnaJ, DnaK and GrpE are required for fully efficient folding. The polypeptide is Protein GrpE (Bartonella quintana (strain Toulouse) (Rochalimaea quintana)).